Reading from the N-terminus, the 354-residue chain is Multiple sugar-binding periplasmic receptor ChvE (354 aa).

Residues 1 to 25 (MKSIISLTAAAAIGVAMFVAPAFAA) form the signal peptide.

The protein belongs to the bacterial solute-binding protein 2 family.

It localises to the periplasm. In terms of biological role, required for effective transcriptional induction of the vir genes by monosaccharides in response to plant signals and for normal growth and chemotaxis towards certain sugars. Functions as a periplasmic multiple sugar-binding receptor protein. It does not interact with a transport system. This Rhizobium radiobacter (Agrobacterium tumefaciens) protein is Multiple sugar-binding periplasmic receptor ChvE (chvE).